The chain runs to 141 residues: Large-conductance mechanosensitive channel (141 aa).

3 consecutive transmembrane segments (helical) span residues 8-28 (FALK…AAFG), 38-58 (IIMP…FFPL), and 80-100 (GNFL…FLIV).

It belongs to the MscL family. Homopentamer.

It is found in the cell inner membrane. Its function is as follows. Channel that opens in response to stretch forces in the membrane lipid bilayer. May participate in the regulation of osmotic pressure changes within the cell. This chain is Large-conductance mechanosensitive channel, found in Beijerinckia indica subsp. indica (strain ATCC 9039 / DSM 1715 / NCIMB 8712).